We begin with the raw amino-acid sequence, 139 residues long: FLYWCH family member 2 (139 aa).

Disordered stretches follow at residues 1–36 and 86–139; these read MPQPKPSEQEGESMKASQEPAPQPGTDVVPAAPRKP and EAQR…STSP. The segment covering 98 to 107 has biased composition (basic and acidic residues); it reads PEQKRSKQNL. The span at 120–130 shows a compositional bias: low complexity; that stretch reads VSSSSSEETTV.

The sequence is that of FLYWCH family member 2 (Flywch2) from Mus musculus (Mouse).